A 341-amino-acid chain; its full sequence is Paired box protein Pax-9 (341 aa).

The segment at residues 4-130 (AFGEVNQLGG…SSISRILRNK (127 aa)) is a DNA-binding region (paired). Positions 7-63 (EVNQLGGVFVNGRPLPNAIRLRIVELAQLGIRPCDISRQLRVSHGCVSKILARYNET) are PAI subdomain. The interval 82–130 (TVVKHIRTYKQRDPGIFAWEIRDRLLADGVCDKYNVPSVSSISRILRNK) is RED subdomain. Residues 168 to 189 (AAAAKVPTPPGVPAIPGSVAMP) are interaction with KDM5B.

As to quaternary structure, interacts with KDM5B.

Its subcellular location is the nucleus. Transcription factor required for normal development of thymus, parathyroid glands, ultimobranchial bodies, teeth, skeletal elements of skull and larynx as well as distal limbs. The chain is Paired box protein Pax-9 (PAX9) from Callimico goeldii (Goeldi's marmoset).